Reading from the N-terminus, the 99-residue chain is Large ribosomal subunit protein uL23 (99 aa).

It belongs to the universal ribosomal protein uL23 family. As to quaternary structure, part of the 50S ribosomal subunit. Contacts protein L29, and trigger factor when it is bound to the ribosome.

One of the early assembly proteins it binds 23S rRNA. One of the proteins that surrounds the polypeptide exit tunnel on the outside of the ribosome. Forms the main docking site for trigger factor binding to the ribosome. The protein is Large ribosomal subunit protein uL23 of Haemophilus influenzae (strain 86-028NP).